Here is a 155-residue protein sequence, read N- to C-terminus: Protein-export protein SecB (155 aa).

The protein belongs to the SecB family. Homotetramer, a dimer of dimers. One homotetramer interacts with 1 SecA dimer.

It is found in the cytoplasm. Functionally, one of the proteins required for the normal export of preproteins out of the cell cytoplasm. It is a molecular chaperone that binds to a subset of precursor proteins, maintaining them in a translocation-competent state. It also specifically binds to its receptor SecA. The sequence is that of Protein-export protein SecB from Enterobacter sp. (strain 638).